The sequence spans 435 residues: Serine--tRNA ligase (435 aa).

Residue 242–244 (TAE) participates in L-serine binding. 273-275 (RSE) contacts ATP. Position 296 (Glu-296) interacts with L-serine. 360–363 (EISS) is an ATP binding site. Ser-396 contributes to the L-serine binding site.

It belongs to the class-II aminoacyl-tRNA synthetase family. Type-1 seryl-tRNA synthetase subfamily. In terms of assembly, homodimer. The tRNA molecule binds across the dimer.

It localises to the cytoplasm. The catalysed reaction is tRNA(Ser) + L-serine + ATP = L-seryl-tRNA(Ser) + AMP + diphosphate + H(+). The enzyme catalyses tRNA(Sec) + L-serine + ATP = L-seryl-tRNA(Sec) + AMP + diphosphate + H(+). It participates in aminoacyl-tRNA biosynthesis; selenocysteinyl-tRNA(Sec) biosynthesis; L-seryl-tRNA(Sec) from L-serine and tRNA(Sec): step 1/1. Catalyzes the attachment of serine to tRNA(Ser). Is also able to aminoacylate tRNA(Sec) with serine, to form the misacylated tRNA L-seryl-tRNA(Sec), which will be further converted into selenocysteinyl-tRNA(Sec). The sequence is that of Serine--tRNA ligase from Vibrio vulnificus (strain YJ016).